An 857-amino-acid chain; its full sequence is Protein translocase subunit SecA (857 aa).

Residues Q88, 106–110 (GEGKT), and D496 each bind ATP. Zn(2+)-binding residues include C833, C835, C844, and C845.

It belongs to the SecA family. Monomer and homodimer. Part of the essential Sec protein translocation apparatus which comprises SecA, SecYEG and auxiliary proteins SecDF-YajC and YidC. It depends on Zn(2+) as a cofactor.

It localises to the cell inner membrane. It is found in the cytoplasm. The catalysed reaction is ATP + H2O + cellular proteinSide 1 = ADP + phosphate + cellular proteinSide 2.. Part of the Sec protein translocase complex. Interacts with the SecYEG preprotein conducting channel. Has a central role in coupling the hydrolysis of ATP to the transfer of proteins into and across the cell membrane, serving as an ATP-driven molecular motor driving the stepwise translocation of polypeptide chains across the membrane. The protein is Protein translocase subunit SecA of Sulfurimonas denitrificans (strain ATCC 33889 / DSM 1251) (Thiomicrospira denitrificans (strain ATCC 33889 / DSM 1251)).